The sequence spans 311 residues: uncharacterized protein (311 aa).

This is an uncharacterized protein from Sinorhizobium fredii (strain NBRC 101917 / NGR234).